The chain runs to 103 residues: Small ribosomal subunit protein uS10 (103 aa).

Residues 35-59 (LSGPVPLPTKTLEVPSRKSPDGEGT) form a disordered region.

The protein belongs to the universal ribosomal protein uS10 family. In terms of assembly, part of the 30S ribosomal subunit.

Functionally, involved in the binding of tRNA to the ribosomes. The polypeptide is Small ribosomal subunit protein uS10 (rps10) (Haloarcula marismortui (strain ATCC 43049 / DSM 3752 / JCM 8966 / VKM B-1809) (Halobacterium marismortui)).